The following is a 129-amino-acid chain: D-ribose pyranase 2 (129 aa).

His20 functions as the Proton donor in the catalytic mechanism. Substrate-binding positions include Asp28, His96, and 118–120; that span reads YAN.

It belongs to the RbsD / FucU family. RbsD subfamily. As to quaternary structure, homodecamer.

It localises to the cytoplasm. It carries out the reaction beta-D-ribopyranose = beta-D-ribofuranose. It functions in the pathway carbohydrate metabolism; D-ribose degradation; D-ribose 5-phosphate from beta-D-ribopyranose: step 1/2. Functionally, catalyzes the interconversion of beta-pyran and beta-furan forms of D-ribose. This is D-ribose pyranase 2 from Streptomyces griseus subsp. griseus (strain JCM 4626 / CBS 651.72 / NBRC 13350 / KCC S-0626 / ISP 5235).